Here is a 229-residue protein sequence, read N- to C-terminus: Transmembrane 4 L6 family member 20 (229 aa).

The Lumenal segment spans residues 1–14 (MTCCEGWTSCNGFS). The chain crosses the membrane as a helical span at residues 15-35 (LLVLLLLGVVLNAIPLIVSLV). Over 36-44 (EEDQFSQNP) the chain is Cytoplasmic. The helical transmembrane segment at 45-65 (ISCFEWWFPGIIGAGLMAIPA) threads the bilayer. Topologically, residues 66–83 (TTMSLTARKRACCNNRTG) are lumenal. The chain crosses the membrane as a helical span at residues 84-104 (MFLSSLFSVITVIGALYCMLI). Topologically, residues 105 to 185 (SIQALLKGPL…HFDSEENKHR (81 aa)) are cytoplasmic. A helical membrane pass occupies residues 186 to 206 (LIHFSVFLGLLLVGILEVLFG). Residues 207 to 229 (LSQIVIGFLGCLCGVSKRRSQIV) are Lumenal-facing.

The protein belongs to the L6 tetraspanin family. In terms of processing, glycosylated at Asn-132, Asn-148 and Asn-163 in presence of ceramide which inverts the orientation of TM4SF20 in membranes exposing these residues to the endoplasmic reticulum lumen. Cleaved by signal peptidase at Ser-14 but the peptide does not act as a signal peptide. Cleavage is inhibited by ceramide which inverts the orientation of TM4SF20 in membranes exposing the N-terminus to the cytosol and not to the endoplasmic reticulum lumen. In terms of tissue distribution, expressed in the brain, with high levels in the parietal lobe, hippocampus, pons, white matter and cerebellum.

The protein resides in the membrane. Its subcellular location is the endoplasmic reticulum membrane. Polytopic transmembrane protein that inhibits regulated intramembrane proteolysis (RIP) of CREB3L1, inhibiting its activation and the induction of collagen synthesis. In response to ceramide, which alters TM4SF20 membrane topology, stimulates RIP activation of CREB3L1. Ceramide reverses the direction through which transmembrane helices are translocated into the endoplasmic reticulum membrane during translation of TM4SF20, this mechanism is called 'regulated alternative translocation' (RAT) and regulates the function of the transmembrane protein. The polypeptide is Transmembrane 4 L6 family member 20 (TM4SF20) (Homo sapiens (Human)).